We begin with the raw amino-acid sequence, 209 residues long: Putative AgrB-like protein (209 aa).

The next 5 membrane-spanning stretches (helical) occupy residues 49 to 71 (ILFL…AAFG), 82 to 102 (AKNS…GAYL), 105 to 125 (YLLF…LLLF), 149 to 169 (QAVL…DELI), and 173 to 193 (ISLS…KVLG).

The protein belongs to the AgrB family.

Its subcellular location is the cell membrane. May be involved in the proteolytic processing of a quorum sensing system signal molecule precursor. This chain is Putative AgrB-like protein, found in Clostridium acetobutylicum (strain ATCC 824 / DSM 792 / JCM 1419 / IAM 19013 / LMG 5710 / NBRC 13948 / NRRL B-527 / VKM B-1787 / 2291 / W).